The chain runs to 192 residues: Ion-translocating oxidoreductase complex subunit B (192 aa).

The segment at 1-26 (MNTIWIAVGALTFLGLVFGAILGYAS) is hydrophobic. In terms of domain architecture, 4Fe-4S spans 32–91 (EDDPVVEKIDAILPQSQCGQCGYPGCRPYAEAVGLQGEKINRCAPGGEAVMLKIADLLNV). Residues Cys-49, Cys-52, Cys-57, Cys-74, Cys-117, Cys-120, Cys-123, Cys-127, Cys-147, Cys-150, Cys-153, and Cys-157 each contribute to the [4Fe-4S] cluster site. 4Fe-4S ferredoxin-type domains are found at residues 108-137 (MLAV…GATR) and 138-167 (AMHT…LRPV).

The protein belongs to the 4Fe4S bacterial-type ferredoxin family. RnfB subfamily. In terms of assembly, the complex is composed of six subunits: RsxA, RsxB, RsxC, RsxD, RsxE and RsxG. Requires [4Fe-4S] cluster as cofactor.

Its subcellular location is the cell inner membrane. Its function is as follows. Part of a membrane-bound complex that couples electron transfer with translocation of ions across the membrane. Required to maintain the reduced state of SoxR. This chain is Ion-translocating oxidoreductase complex subunit B, found in Salmonella arizonae (strain ATCC BAA-731 / CDC346-86 / RSK2980).